We begin with the raw amino-acid sequence, 504 residues long: Probable cytochrome P450 513E1 (504 aa).

Residues 1–21 form a helical membrane-spanning segment; that stretch reads MNLYISILILIISLIIFFKNN. Cysteine 450 lines the heme pocket.

It belongs to the cytochrome P450 family. Requires heme as cofactor.

The protein localises to the membrane. The polypeptide is Probable cytochrome P450 513E1 (cyp513E1) (Dictyostelium discoideum (Social amoeba)).